Reading from the N-terminus, the 332-residue chain is Beta-ketoacyl-[acyl-carrier-protein] synthase III 2 (332 aa).

Catalysis depends on residues C115 and H252. Positions 253–257 (SANLR) are ACP-binding. Residue N282 is part of the active site.

The protein belongs to the thiolase-like superfamily. FabH family. As to quaternary structure, homodimer.

Its subcellular location is the cytoplasm. It carries out the reaction malonyl-[ACP] + acetyl-CoA + H(+) = 3-oxobutanoyl-[ACP] + CO2 + CoA. It participates in lipid metabolism; fatty acid biosynthesis. Functionally, catalyzes the condensation reaction of fatty acid synthesis by the addition to an acyl acceptor of two carbons from malonyl-ACP. Catalyzes the first condensation reaction which initiates fatty acid synthesis and may therefore play a role in governing the total rate of fatty acid production. Possesses both acetoacetyl-ACP synthase and acetyl transacylase activities. Its substrate specificity determines the biosynthesis of branched-chain and/or straight-chain of fatty acids. The chain is Beta-ketoacyl-[acyl-carrier-protein] synthase III 2 from Halalkalibacterium halodurans (strain ATCC BAA-125 / DSM 18197 / FERM 7344 / JCM 9153 / C-125) (Bacillus halodurans).